We begin with the raw amino-acid sequence, 334 residues long: Glycerol-1-phosphate dehydrogenase [NAD(P)+] (334 aa).

NAD(+) is bound by residues 77-81 and 99-102; these read GRPID and TTAS. Aspartate 104 serves as a coordination point for substrate. Serine 108 lines the NAD(+) pocket. Residue aspartate 147 coordinates substrate. 2 residues coordinate Zn(2+): aspartate 147 and histidine 225. Residue histidine 229 participates in substrate binding. Histidine 246 contacts Zn(2+).

Belongs to the glycerol-1-phosphate dehydrogenase family. Zn(2+) serves as cofactor.

The protein resides in the cytoplasm. It catalyses the reaction sn-glycerol 1-phosphate + NAD(+) = dihydroxyacetone phosphate + NADH + H(+). The catalysed reaction is sn-glycerol 1-phosphate + NADP(+) = dihydroxyacetone phosphate + NADPH + H(+). It functions in the pathway membrane lipid metabolism; glycerophospholipid metabolism. Functionally, catalyzes the NAD(P)H-dependent reduction of dihydroxyacetonephosphate (DHAP or glycerone phosphate) to glycerol 1-phosphate (G1P). The G1P thus generated is used as the glycerophosphate backbone of phospholipids in the cellular membranes of Archaea. The chain is Glycerol-1-phosphate dehydrogenase [NAD(P)+] from Methanococcus maripaludis (strain C5 / ATCC BAA-1333).